A 373-amino-acid chain; its full sequence is sn-glycerol-3-phosphate import ATP-binding protein UgpC 2 (373 aa).

In terms of domain architecture, ABC transporter spans 4–234 (IDIRQVRKSY…PASTFVASFI (231 aa)). Residue 36-43 (GPSGCGKS) coordinates ATP.

It belongs to the ABC transporter superfamily. sn-glycerol-3-phosphate importer (TC 3.A.1.1.3) family. In terms of assembly, the complex is composed of two ATP-binding proteins (UgpC), two transmembrane proteins (UgpA and UgpE) and a solute-binding protein (UgpB).

The protein resides in the cell inner membrane. The enzyme catalyses sn-glycerol 3-phosphate(out) + ATP + H2O = sn-glycerol 3-phosphate(in) + ADP + phosphate + H(+). In terms of biological role, part of the ABC transporter complex UgpBAEC involved in sn-glycerol-3-phosphate (G3P) import. Responsible for energy coupling to the transport system. This is sn-glycerol-3-phosphate import ATP-binding protein UgpC 2 from Agrobacterium fabrum (strain C58 / ATCC 33970) (Agrobacterium tumefaciens (strain C58)).